Consider the following 120-residue polypeptide: uncharacterized protein (120 aa).

Residues 93-109 (LCVGISTTMIIQVLFLL) traverse the membrane as a helical segment.

The protein resides in the membrane. This is an uncharacterized protein from Saccharomyces cerevisiae (strain ATCC 204508 / S288c) (Baker's yeast).